Reading from the N-terminus, the 100-residue chain is Cytochrome c2 iso-1 (100 aa).

The heme c site is built by Cys11, Cys14, His15, and Met76.

The protein belongs to the cytochrome c family. Binds 1 heme c group covalently per subunit.

In terms of biological role, cytochrome c2 is found mainly in purple, non-sulfur, photosynthetic bacteria where it functions as the electron donor to the oxidized bacteriochlorophyll in the photophosphorylation pathway. However, it may also have a role in the respiratory chain and is found in some non-photosynthetic bacteria. The polypeptide is Cytochrome c2 iso-1 (Magnetospirillum molischianum (Rhodospirillum molischianum)).